A 164-amino-acid chain; its full sequence is Cold-inducible RNA-binding protein (164 aa).

In terms of domain architecture, RRM spans Gly-6 to Lys-84. Positions Ala-65 to Gly-164 are disordered. Residues Tyr-93–Gly-118 are compositionally biased toward gly residues. Positions Ser-155 to Gly-164 are enriched in basic and acidic residues.

Interacts with prmt1. Interacts with elavl1/elrA (via RRM3). Associates with ribosomes. Methylated on arginine residues within RGG motifs. Methylation by prmt1 promotes cytoplasmic accumulation.

The protein resides in the nucleus. It is found in the nucleoplasm. It localises to the cytoplasm. Its function is as follows. Cold-inducible mRNA binding protein. Acts cooperatively with elavl1/elrA to stabilize AU-rich element (ARE)-containing mRNAs by binding to them and inhibiting their deadenylation. Essential for embryonic gastrulation and neural development, acting to maintain the expression of a set of adhesion molecules, and cell movement during embryogenesis. Required for pronephros development. May play a role in hibernation. The sequence is that of Cold-inducible RNA-binding protein from Aquarana catesbeiana (American bullfrog).